A 377-amino-acid chain; its full sequence is Aquaporin-2 (377 aa).

Residues 1 to 14 (MAANKGINGGIKNH) lie on the Cytoplasmic side of the membrane. A helical membrane pass occupies residues 15–35 (FIAFLGEFVGTFLFLFFAYGG). At 36–56 (TQTANQTSQKNPSIVASPDIN) the chain is on the extracellular side. Asn40 is a glycosylation site (N-linked (GlcNAc...) asparagine). Residues 57 to 77 (QLLYIALIFGFSLTVNVWIFF) traverse the membrane as a helical segment. Residues 78 to 87 (RVSGGLFNPA) lie on the Cytoplasmic side of the membrane. An NPA 1 motif is present at residues 85–87 (NPA). Residues 88–108 (VTIALCLVGVVGPVRSIFIFI) form a helical membrane-spanning segment. The Extracellular portion of the chain corresponds to 109 to 144 (AQVVASIAAAAAVRGLLPGDTVLFSCALAPGTSIAQ). The chain crosses the membrane as a helical span at residues 145–165 (GLFLEMFFTIELVFTILMLAA). The Cytoplasmic segment spans residues 166 to 171 (EKTKVT). A helical transmembrane segment spans residues 172-192 (FVAPVGIGLSLFVAELMGVAW). Residues 193-215 (TGGALNPARAFGAEVIGGFRGYH) are Extracellular-facing. The NPA 2 motif lies at 198-200 (NPA). A helical membrane pass occupies residues 216–236 (WIYWLGPLMGAVLAAGFYKVI). Residues 237 to 377 (KFLNYEQVNG…ANAQNRAKTP (141 aa)) are Cytoplasmic-facing. Disordered stretches follow at residues 278-332 (LFQT…RENE) and 358-377 (RLSG…AKTP). Polar residues-rich tracts occupy residues 315 to 328 (PAQQ…ASTI) and 368 to 377 (ANAQNRAKTP).

It belongs to the MIP/aquaporin (TC 1.A.8) family.

The protein localises to the membrane. The catalysed reaction is H2O(in) = H2O(out). The enzyme catalyses glycerol(in) = glycerol(out). Water channel required to facilitate the transport of water across membranes. Involved in conidiation. The sequence is that of Aquaporin-2 from Botryotinia fuckeliana (strain B05.10) (Noble rot fungus).